Consider the following 118-residue polypeptide: V-type proton ATPase subunit G 3 (118 aa).

A compositionally biased stretch (polar residues) spans 1–12 (MTSQSQGIQQLL). Residues 1 to 44 (MTSQSQGIQQLLQAEKRAKDKLDEAKKRKGKRLRQAKEEAVAET) form a disordered region. A coiled-coil region spans residues 5 to 53 (SQGIQQLLQAEKRAKDKLDEAKKRKGKRLRQAKEEAVAETDQYRMQMEK). Over residues 14–26 (AEKRAKDKLDEAK) the composition is skewed to basic and acidic residues.

This sequence belongs to the V-ATPase G subunit family. V-ATPase is a heteromultimeric enzyme made up of two complexes: the ATP-hydrolytic V1 complex and the proton translocation V0 complex. The V1 complex consists of three catalytic AB heterodimers that form a heterohexamer, three peripheral stalks each consisting of EG heterodimers, one central rotor including subunits D and F, and the regulatory subunits C and H. The proton translocation complex V0 consists of the proton transport subunit a, a ring of proteolipid subunits c9c'', rotary subunit d, subunits e and f, and the accessory subunits ATP6AP1/Ac45 and ATP6AP2/PRR. In terms of tissue distribution, kidney.

In terms of biological role, subunit of the V1 complex of vacuolar(H+)-ATPase (V-ATPase), a multisubunit enzyme composed of a peripheral complex (V1) that hydrolyzes ATP and a membrane integral complex (V0) that translocates protons. V-ATPase is responsible for acidifying and maintaining the pH of intracellular compartments and in some cell types, is targeted to the plasma membrane, where it is responsible for acidifying the extracellular environment. The polypeptide is V-type proton ATPase subunit G 3 (Atp6v1g3) (Mus musculus (Mouse)).